The following is a 102-amino-acid chain: Small ribosomal subunit protein uS10 (102 aa).

The protein belongs to the universal ribosomal protein uS10 family. In terms of assembly, part of the 30S ribosomal subunit.

Involved in the binding of tRNA to the ribosomes. The polypeptide is Small ribosomal subunit protein uS10 (Gluconacetobacter diazotrophicus (strain ATCC 49037 / DSM 5601 / CCUG 37298 / CIP 103539 / LMG 7603 / PAl5)).